We begin with the raw amino-acid sequence, 262 residues long: Probable cutinase 1 (262 aa).

A signal peptide spans 1–19 (MAPLKSLLLGASLATLALS). 2 disulfide bridges follow: cysteine 48–cysteine 127 and cysteine 74–cysteine 88. Residue serine 138 is the Nucleophile of the active site. Cysteine 189 and cysteine 196 are joined by a disulfide. Residue aspartate 193 is part of the active site. Histidine 206 serves as the catalytic Proton donor/acceptor. Positions 228–262 (SSSTTSSSSDAASSSSAAGTSSSGLSGLSSFFGGL) are disordered.

The protein belongs to the cutinase family.

The protein resides in the secreted. The catalysed reaction is cutin + H2O = cutin monomers.. Functionally, catalyzes the hydrolysis of complex carboxylic polyesters found in the cell wall of plants. Degrades cutin, a macromolecule that forms the structure of the plant cuticle. The protein is Probable cutinase 1 of Aspergillus niger (strain ATCC MYA-4892 / CBS 513.88 / FGSC A1513).